Here is a 221-residue protein sequence, read N- to C-terminus: MNNIVLILKMISKHYKQGNTIVRVLDGLNLTANEGELIAIIGSSGSGKSTLLHIAGLLDKPTNGQVIIPNIKYKKYHLIRLYYLGFIYQQHHLLKDFTALENVIIPRLIRGLDQKEAIKDATKILDDLGLEKKLYNMPGELSGGEQQRVAIARSLINKPRIILADEPTGNLDPNTTNEVFNLFLKVARKQNTTVIMVTHNHELAHKMDKLYNLKHGLLNIA.

One can recognise an ABC transporter domain in the interval 8-220 (LKMISKHYKQ…YNLKHGLLNI (213 aa)). An ATP-binding site is contributed by 42–49 (GSSGSGKS).

The protein belongs to the ABC transporter superfamily. Lipoprotein translocase (TC 3.A.1.125) family. In terms of assembly, the complex is composed of two ATP-binding proteins (LolD) and two transmembrane proteins (LolC and LolE).

It is found in the cell inner membrane. Functionally, part of the ABC transporter complex LolCDE involved in the translocation of mature outer membrane-directed lipoproteins, from the inner membrane to the periplasmic chaperone, LolA. Responsible for the formation of the LolA-lipoprotein complex in an ATP-dependent manner. This is Lipoprotein-releasing system ATP-binding protein LolD from Rickettsia prowazekii (strain Madrid E).